Here is a 467-residue protein sequence, read N- to C-terminus: Variant surface glycoprotein 7 (467 aa).

Over residues 77-87 (TIAAGATNTKL) the composition is skewed to polar residues. A disordered region spans residues 77 to 133 (TIAAGATNTKLSGHHPNQGRRGRRRSSSARPNNSKGNSPSKRAGGAVRGETPASGRL). Positions 93-103 (NQGRRGRRRSS) are enriched in basic residues. Residues 107–116 (PNNSKGNSPS) are compositionally biased toward polar residues. Asn-108 and Asn-252 each carry an N-linked (GlcNAc...) asparagine glycan. The interval 382-407 (AEKVENPRSQGNPETAENKKEGGNTA) is disordered. The N-linked (GlcNAc...) asparagine glycan is linked to Asn-416. Asp-444 carries GPI-anchor amidated aspartate lipidation. Positions 445 to 467 (SSFLLSKQFALSVVSAAFAALLF) are cleaved as a propeptide — removed in mature form.

Its subcellular location is the cell membrane. Functionally, VSG forms a coat on the surface of the parasite. The trypanosome evades the immune response of the host by expressing a series of antigenically distinct VSGs from an estimated 1000 VSG genes. The sequence is that of Variant surface glycoprotein 7 from Trypanosoma brucei rhodesiense.